Here is a 349-residue protein sequence, read N- to C-terminus: MESYDVIANQPVVIDNGSGVIKAGFAGDQIPKYCFPNYVGRPKHVRVMAGALEGDIFIGPKAEEHRGLLSIRYPMEHGIVKDWNDMERIWQYVYSKDQLQTFSEEHPVLLTEAPLNPRKNRERAAEVFFETFNVPALFISMQAVLSLYATGRTTGVVLDSGDGVTHAVPIYEGFAMPHSIMRIDIAGRDVSRFLRLYLRKEGYDFHSSSEFEIVKAIKERACYLSINPQKDETLETEKAQYYLPDGSTIEIGPSRFRAPELLFRPDLIGEESEGIHEVLVFAIQKSDMDLRRTLFSNIVLSGGSTLFKGWSLPSAPCPRKLPQSCQAQTPREMTRESPFLPIQVLVTGY.

N-acetylmethionine is present on methionine 1.

The protein belongs to the actin family. ARP1 subfamily. As to quaternary structure, part of the ACTR1A/ACTB filament around which the dynactin complex is built. The filament contains 8 copies of ACTR1A and 1 ACTB. Interacts with dynein and adapters such as BICD2. Interacts with BCCIP (isoform 2/alpha).

The protein resides in the cytoplasm. It localises to the cytoskeleton. It is found in the microtubule organizing center. The protein localises to the centrosome. Its subcellular location is the cell cortex. Functionally, part of the ACTR1A/ACTB filament around which the dynactin complex is built. The dynactin multiprotein complex activates the molecular motor dynein for ultra-processive transport along microtubules. The sequence is that of Alpha-centractin (ACTR1A) from Sus scrofa (Pig).